Reading from the N-terminus, the 1083-residue chain is Solute carrier family 12 member 7 (1083 aa).

The interval 1 to 55 (MPTNFTVVPVEARADGAGDEAAERTEEPESPESVDQTSPTPGDGNPRENSPFINN) is disordered. Residues 1-119 (MPTNFTVVPV…RREVKAPRMG (119 aa)) lie on the Cytoplasmic side of the membrane. The segment covering 12–27 (ARADGAGDEAAERTEE) has biased composition (basic and acidic residues). Residues Ser-30 and Ser-33 each carry the phosphoserine modification. Thr-37 bears the Phosphothreonine mark. Phosphoserine occurs at positions 50 and 62. The discontinuously helical transmembrane segment at 120 to 142 (TFIGVYLPCLQNILGVILFLRLT) threads the bilayer. K(+) is bound by residues Asn-131 and Ile-132. Val-135 contacts chloride. The Extracellular portion of the chain corresponds to 143 to 149 (WIVGAAG). Residues 150-172 (VMESFLIVAMCCTCTMLTAISMS) traverse the membrane as a helical segment. Residues 173–196 (AIATNGVVPAGGSYYMISRSLGPE) lie on the Cytoplasmic side of the membrane. Residues 197-225 (FGGAVGLCFYLGTTFAGAMYILGTIEIFL) form a helical membrane-spanning segment. Residues 226-249 (TYISPSAAIFQAETADGEAAALLN) are Extracellular-facing. 2 helical membrane-spanning segments follow: residues 250-271 (NMRVYGSCALALMAVVVFVGVK) and 272-300 (YVNKLALVFLACVVLSILAIYAGVIKTAF). Topologically, residues 301 to 419 (APPDIPVCLL…PYVLTDIMTY (119 aa)) are extracellular. N-linked (GlcNAc...) (high mannose) asparagine glycosylation is present at Asn-312. N-linked (GlcNAc...) (complex) asparagine glycans are attached at residues Asn-331 and Asn-344. Asn-360 carries an N-linked (GlcNAc...) (high mannose) asparagine glycan. A helical membrane pass occupies residues 420–440 (FTMLVGIYFPSVTGIMAGSNR). K(+)-binding residues include Pro-429 and Thr-432. Pro-429 is a binding site for chloride. The chloride site is built by Gly-433 and Ile-434. Topologically, residues 441-450 (SGDLKDAQKS) are cytoplasmic. A helical transmembrane segment spans residues 451–473 (IPTGTILAIVTTSFIYLSCIVLF). Over 474-504 (GACIEGVVLRDKFGEALQGNLVIGMLAWPSP) the chain is Extracellular. A helical transmembrane segment spans residues 505-531 (WVIVIGSFFSTCGAGLQSLTGAPRLLQ). At 532–554 (AIARDGIIPFLQVFGHGKANGEP) the chain is on the cytoplasmic side. 2 consecutive transmembrane segments (helical) span residues 555–573 (TWALLLTALICETGILIAS) and 574–598 (LDSVAPILSMFFLMCYMFVNLACAV). Residue Tyr-589 coordinates chloride. The Cytoplasmic segment spans residues 599–612 (QTLLRTPNWRPRFK). A run of 2 helical transmembrane segments spans residues 613–635 (FYHWTLSFLGMSLCLALMFICSW) and 636–651 (YYALFAMLIAGCIYKY). Residues 652 to 1083 (IEYRGAEKEW…GGREVITIYS (432 aa)) are Cytoplasmic-facing. The tract at residues 664–680 (GIRGLSLNAARYALLRV) is scissor helix. Residues Thr-973 and Thr-980 each carry the phosphothreonine modification.

The protein belongs to the SLC12A transporter family. K/Cl co-transporter subfamily. In terms of assembly, homodimer; adopts a domain-swap conformation at the scissor helices connecting the transmembrane domain and C-terminal domain. Heterodimer with K-Cl cotransporter SLC12A5. Glycosylation at Asn-331 and Asn-344 is required for proper trafficking to the cell surface, and augments protein stability. As to expression, detected in proximal tubules in the kidney, in particular in basolateral membranes of intercalated cells in the cortical collecting duct.

The protein resides in the cell membrane. The enzyme catalyses K(+)(in) + chloride(in) = K(+)(out) + chloride(out). Activated by N-ethylmaleimide (NEM). Inhibited by furosemide, DIDS and bumetanide. The inhibition is much stronger in the presence of 50 mM K(+) in the uptake medium. Inhibited by DIOA. Inhibited by WNK3. Functionally, mediates electroneutral potassium-chloride cotransport when activated by cell swelling. May mediate K(+) uptake into Deiters' cells in the cochlea and contribute to K(+) recycling in the inner ear. Important for the survival of cochlear outer and inner hair cells and the maintenance of the organ of Corti. May be required for basolateral Cl(-) extrusion in the kidney and contribute to renal acidification. The protein is Solute carrier family 12 member 7 (Slc12a7) of Mus musculus (Mouse).